The primary structure comprises 706 residues: Envelope glycoprotein H (706 aa).

The signal sequence occupies residues 1 to 18; the sequence is MQLLCVFCLVLLWEVGAA. Residues 19 to 682 are Virion surface-facing; the sequence is SLSEVKLHLD…LYEERAHVVL (664 aa). Asparagine 60 carries an N-linked (GlcNAc...) asparagine; by host glycan. An interaction with gL region spans residues 165–229; it reads DKFQYTGAMT…QSGDYSLVIV (65 aa). A disulfide bridge connects residues cysteine 278 and cysteine 335. An N-linked (GlcNAc...) asparagine; by host glycan is attached at asparagine 435. Intrachain disulfides connect cysteine 454-cysteine 478 and cysteine 534-cysteine 587. N-linked (GlcNAc...) asparagine; by host glycans are attached at residues asparagine 549 and asparagine 604. Cysteines 612 and 615 form a disulfide. Asparagine 664 is a glycosylation site (N-linked (GlcNAc...) asparagine; by host). The chain crosses the membrane as a helical span at residues 683–703; sequence AIILYFIAFALGIFLVHKIVM. At 704–706 the chain is on the intravirion side; that stretch reads FFL.

This sequence belongs to the herpesviridae glycoprotein H family. In terms of assembly, interacts with glycoprotein L (gL); this interaction is necessary for the correct processing and cell surface expression of gH. The heterodimer gH/gL seems to interact with gB trimers during fusion. The heterodimer gH/gL interacts with host EPHA2 to facilitate virus internalization and fusion. Interacts with glycoprotein 42/BZLF2. In terms of processing, N-glycosylated, O-glycosylated, and sialylated.

It is found in the virion membrane. It localises to the host cell membrane. Its subcellular location is the host endosome membrane. In terms of biological role, the heterodimer glycoprotein H-glycoprotein L is required for the fusion of viral and plasma membranes leading to virus entry into the host cell. Following initial binding to host receptor, membrane fusion is mediated by the fusion machinery composed of gB and the heterodimer gH/gL. May also be involved in the fusion between the virion envelope and the outer nuclear membrane during virion morphogenesis. The heterodimer gH/gL targets also host EPHA2 to promote viral entry. The chain is Envelope glycoprotein H from Homo sapiens (Human).